Here is a 302-residue protein sequence, read N- to C-terminus: uncharacterized protein (302 aa).

Disordered stretches follow at residues 15 to 34 (RHSTIPSDTHTSREKPRFHK), 143 to 195 (GMPL…PSHL), and 221 to 246 (GSEARSLSLRRQESQPHSGSSRRESV). Residues 172–189 (HSDENKATGQGRENRDQP) show a composition bias toward basic and acidic residues.

This is an uncharacterized protein from Homo sapiens (Human).